A 645-amino-acid polypeptide reads, in one-letter code: MILCRGLFMAVIGIDLGTTNSCVAVMEGGDAKAIENSEGARTTPSIVAFTDSEVLVGDPAKRQATTNAKNTIYASKRLIGRRYQDTRDIKTSYDIVSAKNGDAWIKVRDKDYSPSQIGALILEKMKETAERHLGCKVEKAVITVPAYFDDAQRQATKDAGKIAGLDVIRIINEPTAAALAYGLNKSDKQKVIAVYDLGGGTFDVSILEIADGVFEVKSTNGDTMLGGEDFDHAIMEYLMDDFKKSTGIDLHSDAMAMQRIKEAAEKAKIELSSRMETDINLPFLSSDSTGPKHLSLKLTRATFENLVSDLVKRTIEPCKKALKDAGISADKIDEVVLVGGMTRVPKIIQTVKEFFGKEPHKGVNPDEVVAIGAAIQGGILAGDVRDVLLLDVTPLSLGIETLGGVFTPLIERNTTIPTKKSQVFSTAEDGQTAVTIKVFQGERKMANDNKLLGQFSLEGIPPAPRGMPQIEVTFDIDANGIVHVSAKDKASGKEQAIRIQSSGGLTDDEIQNMIKEAESKAEEDEKRKKFVEVKNNAENLVHSTEKSLKEHGDKISNADKLDIENAIRDLKDCISKDNIEDTDTMQNKLDHLMKVSMKLGEALYSNTNNATAGDNNTTDTGSSSNSDGSKVVDSDYQEIDKKDGK.

Thr-201 is subject to Phosphothreonine; by autocatalysis. Residues 606–629 are compositionally biased toward low complexity; that stretch reads NTNNATAGDNNTTDTGSSSNSDGS. Residues 606–645 form a disordered region; sequence NTNNATAGDNNTTDTGSSSNSDGSKVVDSDYQEIDKKDGK. Residues 630–645 show a composition bias toward basic and acidic residues; sequence KVVDSDYQEIDKKDGK.

Belongs to the heat shock protein 70 family.

In terms of biological role, acts as a chaperone. This Ehrlichia ruminantium (strain Gardel) protein is Chaperone protein DnaK.